Reading from the N-terminus, the 411-residue chain is Imidazolonepropionase (411 aa).

Fe(3+)-binding residues include H75 and H77. Zn(2+) contacts are provided by H75 and H77. R84, Y147, and H180 together coordinate 4-imidazolone-5-propanoate. Y147 contacts N-formimidoyl-L-glutamate. H245 is a Fe(3+) binding site. H245 contacts Zn(2+). Residue Q248 participates in 4-imidazolone-5-propanoate binding. D320 contributes to the Fe(3+) binding site. Position 320 (D320) interacts with Zn(2+). N-formimidoyl-L-glutamate contacts are provided by N322 and G324. 4-imidazolone-5-propanoate is bound at residue T325.

It belongs to the metallo-dependent hydrolases superfamily. HutI family. Zn(2+) is required as a cofactor. Requires Fe(3+) as cofactor.

The protein resides in the cytoplasm. The catalysed reaction is 4-imidazolone-5-propanoate + H2O = N-formimidoyl-L-glutamate. The protein operates within amino-acid degradation; L-histidine degradation into L-glutamate; N-formimidoyl-L-glutamate from L-histidine: step 3/3. In terms of biological role, catalyzes the hydrolytic cleavage of the carbon-nitrogen bond in imidazolone-5-propanoate to yield N-formimidoyl-L-glutamate. It is the third step in the universal histidine degradation pathway. In Aeromonas hydrophila subsp. hydrophila (strain ATCC 7966 / DSM 30187 / BCRC 13018 / CCUG 14551 / JCM 1027 / KCTC 2358 / NCIMB 9240 / NCTC 8049), this protein is Imidazolonepropionase.